Reading from the N-terminus, the 607-residue chain is Discoidin-inducing complex subunit B (607 aa).

A signal peptide spans 1-19 (MNKKIIILIYLIFIKSIVG). Over 20 to 554 (QNPVWIGGSG…LGTDGISKGS (535 aa)) the chain is Extracellular. 10 N-linked (GlcNAc...) asparagine glycosylation sites follow: Asn75, Asn161, Asn215, Asn276, Asn277, Asn307, Asn324, Asn453, Asn477, and Asn527. A helical transmembrane segment spans residues 555–575 (LAGISVSMVALACFVSLGVWW). The Cytoplasmic segment spans residues 576 to 607 (KTSKKNDQRNDSQVLTNFSQNKSDDIDVERKL).

Forms a complex with psiF/dicA.

The protein resides in the membrane. It localises to the secreted. Its function is as follows. Component of a complex that acts as a quorum sensing protein regulating discoidin gene expression during growth and development. Its function in the complex is unclear as it has no ability to induce discoidin during growth and development by itself. The polypeptide is Discoidin-inducing complex subunit B (dicB) (Dictyostelium discoideum (Social amoeba)).